Consider the following 260-residue polypeptide: Putative serine protease 45 (260 aa).

A Peptidase S1 domain is found at 1–234; the sequence is MTRHWPWEVS…YTKWIKKQMS (234 aa). A disulfide bridge links cysteine 19 with cysteine 35. Histidine 34 serves as the catalytic Charge relay system. Asparagine 55 carries N-linked (GlcNAc...) asparagine glycosylation. The active-site Charge relay system is aspartate 82. Disulfide bonds link cysteine 116/cysteine 192, cysteine 151/cysteine 173, and cysteine 182/cysteine 210. Serine 186 functions as the Charge relay system in the catalytic mechanism.

This sequence belongs to the peptidase S1 family.

This chain is Putative serine protease 45, found in Homo sapiens (Human).